We begin with the raw amino-acid sequence, 271 residues long: Formamidopyrimidine-DNA glycosylase (271 aa).

Catalysis depends on proline 2, which acts as the Schiff-base intermediate with DNA. The active-site Proton donor is glutamate 3. Lysine 58 acts as the Proton donor; for beta-elimination activity in catalysis. Residues histidine 91, arginine 110, and arginine 152 each contribute to the DNA site. The FPG-type zinc-finger motif lies at 237 to 271; that stretch reads SVYGRNDAPCPGCGAPIRRSRQGGRSTYFCDRCQH. Arginine 261 (proton donor; for delta-elimination activity) is an active-site residue.

This sequence belongs to the FPG family. In terms of assembly, monomer. Zn(2+) is required as a cofactor.

It catalyses the reaction Hydrolysis of DNA containing ring-opened 7-methylguanine residues, releasing 2,6-diamino-4-hydroxy-5-(N-methyl)formamidopyrimidine.. The enzyme catalyses 2'-deoxyribonucleotide-(2'-deoxyribose 5'-phosphate)-2'-deoxyribonucleotide-DNA = a 3'-end 2'-deoxyribonucleotide-(2,3-dehydro-2,3-deoxyribose 5'-phosphate)-DNA + a 5'-end 5'-phospho-2'-deoxyribonucleoside-DNA + H(+). In terms of biological role, involved in base excision repair of DNA damaged by oxidation or by mutagenic agents. Acts as a DNA glycosylase that recognizes and removes damaged bases. Has a preference for oxidized purines, such as 7,8-dihydro-8-oxoguanine (8-oxoG). Has AP (apurinic/apyrimidinic) lyase activity and introduces nicks in the DNA strand. Cleaves the DNA backbone by beta-delta elimination to generate a single-strand break at the site of the removed base with both 3'- and 5'-phosphates. The polypeptide is Formamidopyrimidine-DNA glycosylase (Geotalea uraniireducens (strain Rf4) (Geobacter uraniireducens)).